Consider the following 154-residue polypeptide: Protein phosphatase 1 regulatory subunit 27 (154 aa).

ANK repeat units lie at residues 63-92 (SGLA…DIHQ) and 96-125 (TGWT…DRDA).

Interacts with DYSF and PPP1CA.

In terms of biological role, inhibits phosphatase activity of protein phosphatase 1 (PP1) complexes. The protein is Protein phosphatase 1 regulatory subunit 27 (Ppp1r27) of Mus musculus (Mouse).